The sequence spans 129 residues: Putative membrane protein insertion efficiency factor (129 aa).

Belongs to the UPF0161 family.

It is found in the cell inner membrane. Could be involved in insertion of integral membrane proteins into the membrane. This Rhodopseudomonas palustris (strain ATCC BAA-98 / CGA009) protein is Putative membrane protein insertion efficiency factor.